Consider the following 406-residue polypeptide: Tryptophan synthase beta chain (406 aa).

K99 is subject to N6-(pyridoxal phosphate)lysine.

This sequence belongs to the TrpB family. In terms of assembly, tetramer of two alpha and two beta chains. Pyridoxal 5'-phosphate is required as a cofactor.

The enzyme catalyses (1S,2R)-1-C-(indol-3-yl)glycerol 3-phosphate + L-serine = D-glyceraldehyde 3-phosphate + L-tryptophan + H2O. It participates in amino-acid biosynthesis; L-tryptophan biosynthesis; L-tryptophan from chorismate: step 5/5. In terms of biological role, the beta subunit is responsible for the synthesis of L-tryptophan from indole and L-serine. This chain is Tryptophan synthase beta chain, found in Chelativorans sp. (strain BNC1).